The following is a 317-amino-acid chain: Small ribosomal subunit protein uS2 (317 aa).

Ser2 is subject to N-acetylserine. 2 laminin-binding regions span residues 161–180 and 205–229; these read IPCNNKGHHSVGLMWWMLSR and RDPEEIEKEEQAAAEKAVGKEEFQG. [DE]-W-[ST] repeat units lie at residues 230–232 and 245–247; these read EWT and DWS. The laminin-binding stretch occupies residues 242–317; sequence EVADWSEGVA…EWGGASADWS (76 aa). Residues 271-284 are compositionally biased toward low complexity; that stretch reads EAAAPSKAPAAAEG. Residues 271–317 are disordered; that stretch reads EAAAPSKAPAAAEGFAEDWSAQPATEDWSAAPTAQATEWGGASADWS. 3 [DE]-W-[ST] repeats span residues 288–290, 297–299, and 315–317; these read DWS.

This sequence belongs to the universal ribosomal protein uS2 family. As to quaternary structure, monomer (37LRP) and homodimer (67LR). Component of the small ribosomal subunit. Mature ribosomes consist of a small (40S) and a large (60S) subunit. The 40S subunit contains about 33 different proteins and 1 molecule of RNA (18S). The 60S subunit contains about 49 different proteins and 3 molecules of RNA (28S, 5.8S and 5S). Interacts with rps21. Interacts with several laminins including at least lamb1. Interacts with mdk. Post-translationally, acylated. Acylation may be a prerequisite for conversion of the monomeric 37 kDa laminin receptor precursor (37LRP) to the mature dimeric 67 kDa laminin receptor (67LR), and may provide a mechanism for membrane association. In terms of processing, cleaved by stromelysin-3 (ST3) at the cell surface. Cleavage by stromelysin-3 may be a mechanism to alter cell-extracellular matrix interactions.

The protein resides in the cell membrane. Its subcellular location is the cytoplasm. The protein localises to the nucleus. Its function is as follows. Required for the assembly and/or stability of the 40S ribosomal subunit. Required for the processing of the 20S rRNA-precursor to mature 18S rRNA in a late step of the maturation of 40S ribosomal subunits. Also functions as a cell surface receptor for laminin. Plays a role in cell adhesion to the basement membrane and in the consequent activation of signaling transduction pathways. May play a role in cell fate determination and tissue morphogenesis. This chain is Small ribosomal subunit protein uS2 (rpsa), found in Salmo salar (Atlantic salmon).